A 156-amino-acid polypeptide reads, in one-letter code: Transcription elongation factor GreA (156 aa).

A coiled-coil region spans residues 1–84; it reads MAKYTISKHR…IEDVMRSTDE (84 aa).

The protein belongs to the GreA/GreB family.

In terms of biological role, necessary for efficient RNA polymerase transcription elongation past template-encoded arresting sites. The arresting sites in DNA have the property of trapping a certain fraction of elongating RNA polymerases that pass through, resulting in locked ternary complexes. Cleavage of the nascent transcript by cleavage factors such as GreA or GreB allows the resumption of elongation from the new 3'terminus. GreA releases sequences of 2 to 3 nucleotides. This chain is Transcription elongation factor GreA, found in Ureaplasma urealyticum serovar 10 (strain ATCC 33699 / Western).